The primary structure comprises 864 residues: Leucine--tRNA ligase (864 aa).

Positions 42-52 (PYPSGKLHMGH) match the 'HIGH' region motif. The short motif at 624-628 (KMSKS) is the 'KMSKS' region element. Residue K627 coordinates ATP.

It belongs to the class-I aminoacyl-tRNA synthetase family.

The protein localises to the cytoplasm. It catalyses the reaction tRNA(Leu) + L-leucine + ATP = L-leucyl-tRNA(Leu) + AMP + diphosphate. This Burkholderia lata (strain ATCC 17760 / DSM 23089 / LMG 22485 / NCIMB 9086 / R18194 / 383) protein is Leucine--tRNA ligase.